A 224-amino-acid chain; its full sequence is 7-cyano-7-deazaguanine synthase (224 aa).

Residue Leu-10–Val-20 participates in ATP binding. Residues Cys-189, Cys-199, Cys-202, and Cys-205 each coordinate Zn(2+).

The protein belongs to the QueC family. Zn(2+) serves as cofactor.

It catalyses the reaction 7-carboxy-7-deazaguanine + NH4(+) + ATP = 7-cyano-7-deazaguanine + ADP + phosphate + H2O + H(+). It participates in purine metabolism; 7-cyano-7-deazaguanine biosynthesis. Its function is as follows. Catalyzes the ATP-dependent conversion of 7-carboxy-7-deazaguanine (CDG) to 7-cyano-7-deazaguanine (preQ(0)). This Ectopseudomonas mendocina (strain ymp) (Pseudomonas mendocina) protein is 7-cyano-7-deazaguanine synthase.